A 269-amino-acid polypeptide reads, in one-letter code: Hydroxyethylthiazole kinase (269 aa).

Methionine 42 contacts substrate. ATP contacts are provided by arginine 118 and serine 164. Glycine 191 serves as a coordination point for substrate.

The protein belongs to the Thz kinase family. Requires Mg(2+) as cofactor.

The catalysed reaction is 5-(2-hydroxyethyl)-4-methylthiazole + ATP = 4-methyl-5-(2-phosphooxyethyl)-thiazole + ADP + H(+). Its pathway is cofactor biosynthesis; thiamine diphosphate biosynthesis; 4-methyl-5-(2-phosphoethyl)-thiazole from 5-(2-hydroxyethyl)-4-methylthiazole: step 1/1. In terms of biological role, catalyzes the phosphorylation of the hydroxyl group of 4-methyl-5-beta-hydroxyethylthiazole (THZ). This Listeria monocytogenes serotype 4b (strain F2365) protein is Hydroxyethylthiazole kinase.